A 414-amino-acid polypeptide reads, in one-letter code: MFVRVKLNKPVKWYRFYSTLDSHSLKLQSGSKFVKIKPVNNLRSSSSADFVSPPNSKLQSLIWQNPLQNVYITKKPWTPSTREAMVEFITHLHESYPEVNVIVQPDVAEEISQDFKSPLENDPNRPHILYTGPEQDIVNRTDLLVTLGGDGTILHGVSMFGNTQVPPVLAFALGTLGFLSPFDFKEHKKVFQEVISSRAKCLHRTRLECHLKKKDSNSSIVTHAMNDIFLHRGNSPHLTNLDIFIDGEFLTRTTADGVALATPTGSTAYSLSAGGSIVSPLVPAILMTPICPRSLSFRPLILPHSSHIRIKIGSKLNQKPVNSVVKLSVDGIPQQDLDVGDEIYVINEVGTIYIDGTQLPTTRKTENDFNNSKKPKRSGIYCVAKTENDWIRGINELLGFNSSFRLTKRQTDND.

It belongs to the NAD kinase family.

The protein localises to the mitochondrion matrix. The enzyme catalyses NADH + ATP = ADP + NADPH + H(+). Phosphorylates both NADH and NAD(+), with a twofold preference for NADH. Anti-oxidant factor and key source of the cellular reductant NADPH. The polypeptide is NADH kinase POS5, mitochondrial (POS5) (Saccharomyces cerevisiae (strain ATCC 204508 / S288c) (Baker's yeast)).